The following is a 212-amino-acid chain: N-(5'-phosphoribosyl)anthranilate isomerase (212 aa).

Belongs to the TrpF family.

The catalysed reaction is N-(5-phospho-beta-D-ribosyl)anthranilate = 1-(2-carboxyphenylamino)-1-deoxy-D-ribulose 5-phosphate. It participates in amino-acid biosynthesis; L-tryptophan biosynthesis; L-tryptophan from chorismate: step 3/5. In Roseiflexus castenholzii (strain DSM 13941 / HLO8), this protein is N-(5'-phosphoribosyl)anthranilate isomerase.